A 311-amino-acid chain; its full sequence is Malate dehydrogenase (311 aa).

NAD(+) contacts are provided by residues G7–G12 and D32. Residues R82 and R88 each contribute to the substrate site. Residues N95 and V118–N120 each bind NAD(+). Substrate-binding residues include N120 and R151. H175 acts as the Proton acceptor in catalysis.

The protein belongs to the LDH/MDH superfamily. MDH type 3 family.

It catalyses the reaction (S)-malate + NAD(+) = oxaloacetate + NADH + H(+). Its function is as follows. Catalyzes the reversible oxidation of malate to oxaloacetate. This is Malate dehydrogenase from Flavobacterium johnsoniae (strain ATCC 17061 / DSM 2064 / JCM 8514 / BCRC 14874 / CCUG 350202 / NBRC 14942 / NCIMB 11054 / UW101) (Cytophaga johnsonae).